Here is a 319-residue protein sequence, read N- to C-terminus: GTP 3',8-cyclase (319 aa).

In terms of domain architecture, Radical SAM core spans 4-219 (KHGRKINYLR…SKHSDLIPVE (216 aa)). R13 lines the GTP pocket. Positions 20 and 24 each coordinate [4Fe-4S] cluster. Y26 provides a ligand contact to S-adenosyl-L-methionine. C27 contributes to the [4Fe-4S] cluster binding site. GTP is bound at residue R63. G67 provides a ligand contact to S-adenosyl-L-methionine. Residue T94 participates in GTP binding. S-adenosyl-L-methionine is bound at residue S118. K155 contacts GTP. M189 contacts S-adenosyl-L-methionine. Residues C249 and C252 each contribute to the [4Fe-4S] cluster site. 254 to 256 (RVR) serves as a coordination point for GTP. C266 lines the [4Fe-4S] cluster pocket.

Belongs to the radical SAM superfamily. MoaA family. In terms of assembly, monomer and homodimer. The cofactor is [4Fe-4S] cluster.

It catalyses the reaction GTP + AH2 + S-adenosyl-L-methionine = (8S)-3',8-cyclo-7,8-dihydroguanosine 5'-triphosphate + 5'-deoxyadenosine + L-methionine + A + H(+). It participates in cofactor biosynthesis; molybdopterin biosynthesis. Catalyzes the cyclization of GTP to (8S)-3',8-cyclo-7,8-dihydroguanosine 5'-triphosphate. This Clostridium botulinum (strain Okra / Type B1) protein is GTP 3',8-cyclase.